A 143-amino-acid chain; its full sequence is Gastrin-releasing peptide (143 aa).

A signal peptide spans 1-23; it reads MRGPELRLVLLALVLCQAPLGPA. A Methionine amide modification is found at methionine 50. Residues 54–143 constitute a propeptide that is removed on maturation; the sequence is STGESRHVLE…GLKAKEGALS (90 aa). Positions 91-115 are disordered; the sequence is KGNSSHRSPQLKPLSTHQPTLDTED. Residues 92-111 are compositionally biased toward polar residues; the sequence is GNSSHRSPQLKPLSTHQPTL.

Belongs to the bombesin/neuromedin-B/ranatensin family.

It is found in the secreted. The protein localises to the cytoplasmic vesicle. The protein resides in the secretory vesicle lumen. It localises to the cell projection. Its subcellular location is the neuron projection. Functionally, stimulates the release of gastrin and other gastrointestinal hormones. Contributes to the perception of prurient stimuli and to the transmission of itch signals in the spinal cord that promote scratching behavior. Contributes primarily to nonhistaminergic itch sensation. In one study, shown to act in the amygdala as part of an inhibitory network which inhibits memory specifically related to learned fear. In another study, shown to act on vasoactive intestinal peptide (VIP)-expressing cells in the auditory cortex, most likely via extrasynaptic diffusion from local and long-range sources, to mediate disinhibition of glutamatergic cells via VIP cell-specific GRPR signaling which leads to enhanced auditory fear memories. Contributes to the regulation of food intake. Inhibits voltage-gated sodium channels but enhances voltage-gated potassium channels in hippocampal neurons. Induces sighing by acting directly on the pre-Botzinger complex, a cluster of several thousand neurons in the ventrolateral medulla responsible for inspiration during respiratory activity. In terms of biological role, induces an itch response through activation of receptors present on mast cells, triggering mast cell degranulation. The sequence is that of Gastrin-releasing peptide (GRP) from Cavia porcellus (Guinea pig).